Reading from the N-terminus, the 137-residue chain is Large-conductance mechanosensitive channel (137 aa).

Helical transmembrane passes span 10 to 30 (FAMR…AAFG) and 76 to 96 (GVFI…FVAI).

The protein belongs to the MscL family. As to quaternary structure, homopentamer.

The protein resides in the cell inner membrane. In terms of biological role, channel that opens in response to stretch forces in the membrane lipid bilayer. May participate in the regulation of osmotic pressure changes within the cell. In Salmonella typhimurium (strain LT2 / SGSC1412 / ATCC 700720), this protein is Large-conductance mechanosensitive channel.